A 150-amino-acid chain; its full sequence is D-aminoacyl-tRNA deacylase (150 aa).

The Gly-cisPro motif, important for rejection of L-amino acids motif lies at 138-139 (GP).

Belongs to the DTD family. As to quaternary structure, homodimer.

Its subcellular location is the cytoplasm. It catalyses the reaction glycyl-tRNA(Ala) + H2O = tRNA(Ala) + glycine + H(+). It carries out the reaction a D-aminoacyl-tRNA + H2O = a tRNA + a D-alpha-amino acid + H(+). Functionally, an aminoacyl-tRNA editing enzyme that deacylates mischarged D-aminoacyl-tRNAs. Also deacylates mischarged glycyl-tRNA(Ala), protecting cells against glycine mischarging by AlaRS. Acts via tRNA-based rather than protein-based catalysis; rejects L-amino acids rather than detecting D-amino acids in the active site. By recycling D-aminoacyl-tRNA to D-amino acids and free tRNA molecules, this enzyme counteracts the toxicity associated with the formation of D-aminoacyl-tRNA entities in vivo and helps enforce protein L-homochirality. This is D-aminoacyl-tRNA deacylase from Flavobacterium johnsoniae (strain ATCC 17061 / DSM 2064 / JCM 8514 / BCRC 14874 / CCUG 350202 / NBRC 14942 / NCIMB 11054 / UW101) (Cytophaga johnsonae).